The following is a 347-amino-acid chain: Gamma-glutamyl hydrolase B (347 aa).

The N-terminal stretch at M1–T22 is a signal peptide. One can recognise a Gamma-glutamyl hydrolase domain in the interval I23–N314. The active-site Nucleophile is the C128. N152, N158, and N201 each carry an N-linked (GlcNAc...) asparagine glycan. H240 acts as the Proton donor in catalysis. N273, N314, and N318 each carry an N-linked (GlcNAc...) asparagine glycan.

The protein belongs to the peptidase C26 family.

The protein resides in the secreted. It is found in the extracellular space. The enzyme catalyses (6S)-5,6,7,8-tetrahydrofolyl-(gamma-L-Glu)(n) + (n-1) H2O = (6S)-5,6,7,8-tetrahydrofolate + (n-1) L-glutamate. This chain is Gamma-glutamyl hydrolase B (gghB), found in Dictyostelium discoideum (Social amoeba).